The following is a 261-amino-acid chain: 5'-nucleotidase SurE (261 aa).

Residues Asp-8, Asp-9, Ser-43, and Asn-96 each contribute to the a divalent metal cation site.

This sequence belongs to the SurE nucleotidase family. A divalent metal cation serves as cofactor.

Its subcellular location is the cytoplasm. The catalysed reaction is a ribonucleoside 5'-phosphate + H2O = a ribonucleoside + phosphate. Its function is as follows. Nucleotidase that shows phosphatase activity on nucleoside 5'-monophosphates. The sequence is that of 5'-nucleotidase SurE from Cereibacter sphaeroides (strain ATCC 17025 / ATH 2.4.3) (Rhodobacter sphaeroides).